Here is a 179-residue protein sequence, read N- to C-terminus: Large ribosomal subunit protein uL5 (179 aa).

Belongs to the universal ribosomal protein uL5 family. Part of the 50S ribosomal subunit; part of the 5S rRNA/L5/L18/L25 subcomplex. Contacts the 5S rRNA and the P site tRNA. Forms a bridge to the 30S subunit in the 70S ribosome.

Its function is as follows. This is one of the proteins that bind and probably mediate the attachment of the 5S RNA into the large ribosomal subunit, where it forms part of the central protuberance. In the 70S ribosome it contacts protein S13 of the 30S subunit (bridge B1b), connecting the 2 subunits; this bridge is implicated in subunit movement. Contacts the P site tRNA; the 5S rRNA and some of its associated proteins might help stabilize positioning of ribosome-bound tRNAs. The polypeptide is Large ribosomal subunit protein uL5 (Aeromonas salmonicida (strain A449)).